A 98-amino-acid polypeptide reads, in one-letter code: NADH-ubiquinone oxidoreductase chain 4L (98 aa).

Transmembrane regions (helical) follow at residues methionine 1–methionine 21, alanine 29–leucine 49, and isoleucine 61–isoleucine 81.

It belongs to the complex I subunit 4L family. Core subunit of respiratory chain NADH dehydrogenase (Complex I) which is composed of 45 different subunits.

Its subcellular location is the mitochondrion inner membrane. It catalyses the reaction a ubiquinone + NADH + 5 H(+)(in) = a ubiquinol + NAD(+) + 4 H(+)(out). In terms of biological role, core subunit of the mitochondrial membrane respiratory chain NADH dehydrogenase (Complex I) which catalyzes electron transfer from NADH through the respiratory chain, using ubiquinone as an electron acceptor. Part of the enzyme membrane arm which is embedded in the lipid bilayer and involved in proton translocation. The sequence is that of NADH-ubiquinone oxidoreductase chain 4L (MT-ND4L) from Ziphius cavirostris (Cuvier's beaked whale).